We begin with the raw amino-acid sequence, 164 residues long: Transcription antitermination protein NusB (164 aa).

This sequence belongs to the NusB family.

Its function is as follows. Involved in transcription antitermination. Required for transcription of ribosomal RNA (rRNA) genes. Binds specifically to the boxA antiterminator sequence of the ribosomal RNA (rrn) operons. The chain is Transcription antitermination protein NusB from Chlorobaculum parvum (strain DSM 263 / NCIMB 8327) (Chlorobium vibrioforme subsp. thiosulfatophilum).